Consider the following 506-residue polypeptide: UDP-N-acetylmuramoyl-L-alanyl-D-glutamate--2,6-diaminopimelate ligase (506 aa).

S42 serves as a coordination point for UDP-N-acetyl-alpha-D-muramoyl-L-alanyl-D-glutamate. 125–131 (GTSGKTT) is a binding site for ATP. UDP-N-acetyl-alpha-D-muramoyl-L-alanyl-D-glutamate-binding positions include 166–167 (TT), S193, and R201. K233 carries the post-translational modification N6-carboxylysine. Residues R395, 419–422 (DNPR), G475, and E479 contribute to the meso-2,6-diaminopimelate site. The Meso-diaminopimelate recognition motif motif lies at 419–422 (DNPR).

The protein belongs to the MurCDEF family. MurE subfamily. The cofactor is Mg(2+). Post-translationally, carboxylation is probably crucial for Mg(2+) binding and, consequently, for the gamma-phosphate positioning of ATP.

The protein resides in the cytoplasm. It catalyses the reaction UDP-N-acetyl-alpha-D-muramoyl-L-alanyl-D-glutamate + meso-2,6-diaminopimelate + ATP = UDP-N-acetyl-alpha-D-muramoyl-L-alanyl-gamma-D-glutamyl-meso-2,6-diaminopimelate + ADP + phosphate + H(+). It participates in cell wall biogenesis; peptidoglycan biosynthesis. In terms of biological role, catalyzes the addition of meso-diaminopimelic acid to the nucleotide precursor UDP-N-acetylmuramoyl-L-alanyl-D-glutamate (UMAG) in the biosynthesis of bacterial cell-wall peptidoglycan. The protein is UDP-N-acetylmuramoyl-L-alanyl-D-glutamate--2,6-diaminopimelate ligase of Streptomyces avermitilis (strain ATCC 31267 / DSM 46492 / JCM 5070 / NBRC 14893 / NCIMB 12804 / NRRL 8165 / MA-4680).